A 398-amino-acid chain; its full sequence is 1-deoxy-D-xylulose 5-phosphate reductoisomerase (398 aa).

Positions 21, 22, 23, 24, 47, 50, and 127 each coordinate NADPH. Residue K128 participates in 1-deoxy-D-xylulose 5-phosphate binding. E129 serves as a coordination point for NADPH. Residue D151 coordinates Mn(2+). 1-deoxy-D-xylulose 5-phosphate is bound by residues S152, E153, S177, and H200. E153 provides a ligand contact to Mn(2+). Residue G206 participates in NADPH binding. 4 residues coordinate 1-deoxy-D-xylulose 5-phosphate: S213, N218, K219, and E222. E222 lines the Mn(2+) pocket.

It belongs to the DXR family. Mg(2+) serves as cofactor. The cofactor is Mn(2+).

It catalyses the reaction 2-C-methyl-D-erythritol 4-phosphate + NADP(+) = 1-deoxy-D-xylulose 5-phosphate + NADPH + H(+). It participates in isoprenoid biosynthesis; isopentenyl diphosphate biosynthesis via DXP pathway; isopentenyl diphosphate from 1-deoxy-D-xylulose 5-phosphate: step 1/6. In terms of biological role, catalyzes the NADPH-dependent rearrangement and reduction of 1-deoxy-D-xylulose-5-phosphate (DXP) to 2-C-methyl-D-erythritol 4-phosphate (MEP). In Mycolicibacterium smegmatis (strain ATCC 700084 / mc(2)155) (Mycobacterium smegmatis), this protein is 1-deoxy-D-xylulose 5-phosphate reductoisomerase.